A 124-amino-acid chain; its full sequence is Alkaline proteinase inhibitor (124 aa).

Residues Met-1 to Gly-24 form the signal peptide. Cys-47 and Cys-70 are disulfide-bonded.

The protein belongs to the protease inhibitor I38 family. As to quaternary structure, monomer.

Its subcellular location is the periplasm. In terms of biological role, inhibitor of the alkaline protease. Inhibits SMP by formation of a non-covalent complex with a molar ratio of 1:1 and shows a high specificity. In Serratia marcescens, this protein is Alkaline proteinase inhibitor (inh).